The primary structure comprises 144 residues: High mobility group B protein 2 (144 aa).

Composition is skewed to basic and acidic residues over residues 1–12 (MKGAKSKTETRS) and 73–94 (AGDK…KAEK). Disordered regions lie at residues 1–42 (MKGA…KRPA), 57–94 (KKEN…KAEK), and 106–144 (YNKK…EDDD). The segment at residues 38-107 (PKRPASAFFV…EYEKNIKAYN (70 aa)) is a DNA-binding region (HMG box). Position 125 is a phosphoserine (serine 125). Over residues 127–144 (VNDEDDAEDGSEEEEDDD) the composition is skewed to acidic residues.

The protein belongs to the HMGB family. In terms of tissue distribution, mostly expressed in cotyledons, hypocotyls, leaves, and flowers (excluding pedicels), also present in roots and stems.

The protein localises to the nucleus. It is found in the cytoplasm. The protein resides in the cytosol. In terms of biological role, binds preferentially double-stranded DNA. Confers sensitivity to salt and drought stresses. This Arabidopsis thaliana (Mouse-ear cress) protein is High mobility group B protein 2 (HMGB2).